The primary structure comprises 645 residues: Rab11 family-interacting protein 5 (645 aa).

One can recognise a C2 domain in the interval 1 to 146; that stretch reads MALVRDPEPA…AGRAQHTQWY (146 aa). S176, S283, S286, S307, S357, and S367 each carry phosphoserine. A disordered region spans residues 271 to 299; that stretch reads GAELLTRSPSHSSWLSTEGGRDSIQSPKL. Over residues 277–286 the composition is skewed to polar residues; the sequence is RSPSHSSWLS. A disordered region spans residues 341–550; the sequence is SHVYNEEPQP…STALSSGLER (210 aa). Low complexity predominate over residues 357-374; the sequence is SISGPFPPSSSLHSVPPR. Residues 375 to 387 are compositionally biased toward basic and acidic residues; it reads SSEEGSRSSDDSW. A phosphoserine mark is found at S391 and S395. Residues 452 to 463 are compositionally biased toward basic residues; it reads RMGLFHHHHHQG. Phosphoserine occurs at positions 486, 530, 539, 545, and 640. Positions 578-640 constitute an FIP-RBD domain; the sequence is KDSAVLDQSA…ETSPTLLQIS (63 aa).

In terms of assembly, interacts with RAB11FIP4. Interacts with NAPG. Interacts with RO60. Interacts with RAB11A that has been activated by GTP binding. In terms of processing, phosphorylated on serine and threonine residues. Phosphorylation at Ser-357 is PKA-dependent.

The protein localises to the cytoplasm. Its subcellular location is the recycling endosome membrane. The protein resides in the early endosome membrane. It localises to the golgi apparatus membrane. It is found in the cytoplasmic vesicle. The protein localises to the secretory vesicle membrane. Its subcellular location is the mitochondrion membrane. Its function is as follows. Rab effector involved in protein trafficking from apical recycling endosomes to the apical plasma membrane. Involved in insulin granule exocytosis. May regulate V-ATPase intracellular transport in response to extracellular acidosis. The polypeptide is Rab11 family-interacting protein 5 (Mus musculus (Mouse)).